The primary structure comprises 460 residues: Bifunctional protein GlmU (460 aa).

A pyrophosphorylase region spans residues 1 to 232 (MALNVVILAA…AIEVEGANNR (232 aa)). UDP-N-acetyl-alpha-D-glucosamine contacts are provided by residues 8–11 (LAAG), Lys-22, Gln-73, 78–79 (GT), 100–102 (YGD), Gly-137, Glu-157, Asn-172, and Asn-230. Asp-102 contacts Mg(2+). Asn-230 contacts Mg(2+). Residues 233–253 (VQLAQLERAYQAREAEKLMLA) form a linker region. The tract at residues 254–460 (GANLRDPSRI…GWQRPVKIKK (207 aa)) is N-acetyltransferase. UDP-N-acetyl-alpha-D-glucosamine contacts are provided by Arg-336 and Lys-354. Catalysis depends on His-366, which acts as the Proton acceptor. 2 residues coordinate UDP-N-acetyl-alpha-D-glucosamine: Tyr-369 and Asn-380. Acetyl-CoA contacts are provided by residues Ala-383, 389–390 (NY), Ser-408, Ala-426, and Arg-443.

The protein in the N-terminal section; belongs to the N-acetylglucosamine-1-phosphate uridyltransferase family. This sequence in the C-terminal section; belongs to the transferase hexapeptide repeat family. As to quaternary structure, homotrimer. Mg(2+) is required as a cofactor.

It localises to the cytoplasm. The catalysed reaction is alpha-D-glucosamine 1-phosphate + acetyl-CoA = N-acetyl-alpha-D-glucosamine 1-phosphate + CoA + H(+). It carries out the reaction N-acetyl-alpha-D-glucosamine 1-phosphate + UTP + H(+) = UDP-N-acetyl-alpha-D-glucosamine + diphosphate. It functions in the pathway nucleotide-sugar biosynthesis; UDP-N-acetyl-alpha-D-glucosamine biosynthesis; N-acetyl-alpha-D-glucosamine 1-phosphate from alpha-D-glucosamine 6-phosphate (route II): step 2/2. Its pathway is nucleotide-sugar biosynthesis; UDP-N-acetyl-alpha-D-glucosamine biosynthesis; UDP-N-acetyl-alpha-D-glucosamine from N-acetyl-alpha-D-glucosamine 1-phosphate: step 1/1. It participates in bacterial outer membrane biogenesis; LPS lipid A biosynthesis. In terms of biological role, catalyzes the last two sequential reactions in the de novo biosynthetic pathway for UDP-N-acetylglucosamine (UDP-GlcNAc). The C-terminal domain catalyzes the transfer of acetyl group from acetyl coenzyme A to glucosamine-1-phosphate (GlcN-1-P) to produce N-acetylglucosamine-1-phosphate (GlcNAc-1-P), which is converted into UDP-GlcNAc by the transfer of uridine 5-monophosphate (from uridine 5-triphosphate), a reaction catalyzed by the N-terminal domain. The chain is Bifunctional protein GlmU from Shewanella baltica (strain OS223).